A 118-amino-acid chain; its full sequence is Probable non-functional immunoglobulin lambda variable 1-50 (118 aa).

Residues 1 to 19 (MAWSSLLLTLLAHCTGSWA) form the signal peptide. A framework-1 region spans residues 20-44 (QSVLTQPPSVSGAPGQRVTISCTGS). The Ig-like domain maps to 20–118 (QSVLTQPPSV…CKAWDNSLNA (99 aa)). A disulfide bond links C41 and C109. The tract at residues 45-53 (SSNIGAGYV) is complementarity-determining-1. The tract at residues 54–70 (VHWYQQLPGTAPKLLIY) is framework-2. Positions 71-73 (GNS) are complementarity-determining-2. A framework-3 region spans residues 74 to 109 (NRPSGVPDQFSGSKSGTSASLAITGLQSEDEADYYC). The complementarity-determining-3 stretch occupies residues 110 to 118 (KAWDNSLNA).

In terms of assembly, immunoglobulins are composed of two identical heavy chains and two identical light chains; disulfide-linked.

Its subcellular location is the secreted. It is found in the cell membrane. Probable non-functional open reading frame (ORF) of V region of the variable domain of immunoglobulin light chains. Non-functional ORF generally cannot participate in the synthesis of a productive immunoglobulin chain due to altered V-(D)-J or switch recombination and/or splicing site (at mRNA level) and/or conserved amino acid change (protein level). Immunoglobulins, also known as antibodies, are membrane-bound or secreted glycoproteins produced by B lymphocytes. In the recognition phase of humoral immunity, the membrane-bound immunoglobulins serve as receptors which, upon binding of a specific antigen, trigger the clonal expansion and differentiation of B lymphocytes into immunoglobulins-secreting plasma cells. Secreted immunoglobulins mediate the effector phase of humoral immunity, which results in the elimination of bound antigens. The antigen binding site is formed by the variable domain of one heavy chain, together with that of its associated light chain. Thus, each immunoglobulin has two antigen binding sites with remarkable affinity for a particular antigen. The variable domains are assembled by a process called V-(D)-J rearrangement and can then be subjected to somatic hypermutations which, after exposure to antigen and selection, allow affinity maturation for a particular antigen. In Homo sapiens (Human), this protein is Probable non-functional immunoglobulin lambda variable 1-50.